We begin with the raw amino-acid sequence, 247 residues long: UPF0309 protein GWCH70_1414 (247 aa).

The SIS domain maps to 31 to 214; it reads VSEAIQKGGI…VLMAENGFEP (184 aa).

The protein belongs to the UPF0309 family.

In Geobacillus sp. (strain WCH70), this protein is UPF0309 protein GWCH70_1414.